A 925-amino-acid polypeptide reads, in one-letter code: Protein translocase subunit SecA (925 aa).

ATP-binding positions include Gln-87, 105–109 (GEGKT), and Asp-512. 4 residues coordinate Zn(2+): Cys-910, Cys-912, Cys-921, and His-922.

The protein belongs to the SecA family. As to quaternary structure, monomer and homodimer. Part of the essential Sec protein translocation apparatus which comprises SecA, SecYEG and auxiliary proteins SecDF-YajC and YidC. Zn(2+) is required as a cofactor.

It is found in the cell inner membrane. The protein localises to the cytoplasm. It catalyses the reaction ATP + H2O + cellular proteinSide 1 = ADP + phosphate + cellular proteinSide 2.. In terms of biological role, part of the Sec protein translocase complex. Interacts with the SecYEG preprotein conducting channel. Has a central role in coupling the hydrolysis of ATP to the transfer of proteins into and across the cell membrane, serving both as a receptor for the preprotein-SecB complex and as an ATP-driven molecular motor driving the stepwise translocation of polypeptide chains across the membrane. The chain is Protein translocase subunit SecA from Psychrobacter sp. (strain PRwf-1).